The chain runs to 174 residues: Probasin (174 aa).

The N-terminal stretch at 1 to 18 is a signal peptide; the sequence is MMRVIILLLTLHVLGVSS. Cys77 and Cys168 are disulfide-bonded.

Belongs to the calycin superfamily. Lipocalin family.

Its subcellular location is the secreted. This Mus musculus (Mouse) protein is Probasin (Pbsn).